The primary structure comprises 622 residues: Chaperone protein HtpG (622 aa).

The segment at 1–322 is a; substrate-binding; sequence MTEAKNYEFQ…SEDLPLNISR (322 aa). The tract at residues 323-539 is b; that stretch reads QSLQDNALVS…DGFMSASMER (217 aa). Residues 540–622 are c; sequence VLAASRKEQG…KILDRAVSRA (83 aa).

It belongs to the heat shock protein 90 family. Homodimer.

Its subcellular location is the cytoplasm. In terms of biological role, molecular chaperone. Has ATPase activity. This chain is Chaperone protein HtpG, found in Desulfotalea psychrophila (strain LSv54 / DSM 12343).